The following is a 609-amino-acid chain: UvrABC system protein C (609 aa).

A GIY-YIG domain is found at 22–100 (EKPGVYQYLN…IKKYKPRYNV (79 aa)). Residues 214-249 (QDISRMLVEKMQELANEMKFEEAQKIKEKYLLIENY) form the UVR domain.

The protein belongs to the UvrC family. As to quaternary structure, interacts with UvrB in an incision complex.

The protein resides in the cytoplasm. Its function is as follows. The UvrABC repair system catalyzes the recognition and processing of DNA lesions. UvrC both incises the 5' and 3' sides of the lesion. The N-terminal half is responsible for the 3' incision and the C-terminal half is responsible for the 5' incision. The protein is UvrABC system protein C of Bacteroides thetaiotaomicron (strain ATCC 29148 / DSM 2079 / JCM 5827 / CCUG 10774 / NCTC 10582 / VPI-5482 / E50).